Here is a 348-residue protein sequence, read N- to C-terminus: RNA 3'-terminal phosphate cyclase (348 aa).

ATP-binding positions include glutamine 101 and 286-289; that span reads HMAD. Catalysis depends on histidine 312, which acts as the Tele-AMP-histidine intermediate.

Belongs to the RNA 3'-terminal cyclase family. Type 1 subfamily.

It localises to the cytoplasm. The catalysed reaction is a 3'-end 3'-phospho-ribonucleotide-RNA + ATP = a 3'-end 2',3'-cyclophospho-ribonucleotide-RNA + AMP + diphosphate. In terms of biological role, catalyzes the conversion of 3'-phosphate to a 2',3'-cyclic phosphodiester at the end of RNA. The mechanism of action of the enzyme occurs in 3 steps: (A) adenylation of the enzyme by ATP; (B) transfer of adenylate to an RNA-N3'P to produce RNA-N3'PP5'A; (C) and attack of the adjacent 2'-hydroxyl on the 3'-phosphorus in the diester linkage to produce the cyclic end product. The biological role of this enzyme is unknown but it is likely to function in some aspects of cellular RNA processing. The polypeptide is RNA 3'-terminal phosphate cyclase (Pyrobaculum aerophilum (strain ATCC 51768 / DSM 7523 / JCM 9630 / CIP 104966 / NBRC 100827 / IM2)).